The chain runs to 369 residues: Anhydro-N-acetylmuramic acid kinase (369 aa).

12-19 (GTSLDGVD) is an ATP binding site.

Belongs to the anhydro-N-acetylmuramic acid kinase family.

The catalysed reaction is 1,6-anhydro-N-acetyl-beta-muramate + ATP + H2O = N-acetyl-D-muramate 6-phosphate + ADP + H(+). It functions in the pathway amino-sugar metabolism; 1,6-anhydro-N-acetylmuramate degradation. The protein operates within cell wall biogenesis; peptidoglycan recycling. Its function is as follows. Catalyzes the specific phosphorylation of 1,6-anhydro-N-acetylmuramic acid (anhMurNAc) with the simultaneous cleavage of the 1,6-anhydro ring, generating MurNAc-6-P. Is required for the utilization of anhMurNAc either imported from the medium or derived from its own cell wall murein, and thus plays a role in cell wall recycling. This chain is Anhydro-N-acetylmuramic acid kinase, found in Actinobacillus pleuropneumoniae serotype 5b (strain L20).